The sequence spans 129 residues: Small ribosomal subunit protein uS11 (129 aa).

The protein belongs to the universal ribosomal protein uS11 family. As to quaternary structure, part of the 30S ribosomal subunit. Interacts with proteins S7 and S18. Binds to IF-3.

Its function is as follows. Located on the platform of the 30S subunit, it bridges several disparate RNA helices of the 16S rRNA. Forms part of the Shine-Dalgarno cleft in the 70S ribosome. This is Small ribosomal subunit protein uS11 from Desulfovibrio desulfuricans (strain ATCC 27774 / DSM 6949 / MB).